Consider the following 270-residue polypeptide: Formamidopyrimidine-DNA glycosylase (270 aa).

Pro2 serves as the catalytic Schiff-base intermediate with DNA. Glu3 acts as the Proton donor in catalysis. Lys57 serves as the catalytic Proton donor; for beta-elimination activity. DNA-binding residues include His90, Arg109, and Lys150. An FPG-type zinc finger spans residues 235–269 (LVYGNKDKPCPRCGTKIKSIIIGQRNSFFCPQCQK). Arg259 (proton donor; for delta-elimination activity) is an active-site residue.

It belongs to the FPG family. In terms of assembly, monomer. Requires Zn(2+) as cofactor.

It catalyses the reaction Hydrolysis of DNA containing ring-opened 7-methylguanine residues, releasing 2,6-diamino-4-hydroxy-5-(N-methyl)formamidopyrimidine.. The enzyme catalyses 2'-deoxyribonucleotide-(2'-deoxyribose 5'-phosphate)-2'-deoxyribonucleotide-DNA = a 3'-end 2'-deoxyribonucleotide-(2,3-dehydro-2,3-deoxyribose 5'-phosphate)-DNA + a 5'-end 5'-phospho-2'-deoxyribonucleoside-DNA + H(+). Involved in base excision repair of DNA damaged by oxidation or by mutagenic agents. Acts as a DNA glycosylase that recognizes and removes damaged bases. Has a preference for oxidized purines, such as 7,8-dihydro-8-oxoguanine (8-oxoG). Has AP (apurinic/apyrimidinic) lyase activity and introduces nicks in the DNA strand. Cleaves the DNA backbone by beta-delta elimination to generate a single-strand break at the site of the removed base with both 3'- and 5'-phosphates. This is Formamidopyrimidine-DNA glycosylase from Histophilus somni (strain 2336) (Haemophilus somnus).